A 389-amino-acid polypeptide reads, in one-letter code: Coproporphyrin III ferrochelatase (389 aa).

The Fe-coproporphyrin III site is built by serine 70 and tyrosine 139. Position 205 (histidine 205) interacts with Fe(2+). Residues 207–229 (IPSTDAGKSGPSGRPDSGEPWGE) form a disordered region. Glutamate 303 is a Fe(2+) binding site.

It belongs to the ferrochelatase family.

It is found in the cytoplasm. The enzyme catalyses Fe-coproporphyrin III + 2 H(+) = coproporphyrin III + Fe(2+). Its pathway is porphyrin-containing compound metabolism; protoheme biosynthesis. Involved in coproporphyrin-dependent heme b biosynthesis. Catalyzes the insertion of ferrous iron into coproporphyrin III to form Fe-coproporphyrin III. This Leifsonia xyli subsp. xyli (strain CTCB07) protein is Coproporphyrin III ferrochelatase.